The following is a 724-amino-acid chain: Acyl-coenzyme A oxidase 2 (724 aa).

Positions Met-1–Pro-23 are disordered. Over residues Leu-7–Thr-21 the composition is skewed to basic and acidic residues.

It belongs to the acyl-CoA oxidase family. The cofactor is FAD.

The protein resides in the peroxisome. The enzyme catalyses a 2,3-saturated acyl-CoA + O2 = a (2E)-enoyl-CoA + H2O2. Its pathway is lipid metabolism; peroxisomal fatty acid beta-oxidation. This Candida maltosa (Yeast) protein is Acyl-coenzyme A oxidase 2 (POX2).